The chain runs to 135 residues: Transcriptional regulator HosA (135 aa).

Positions 4-134 (RNKAFHQLRQ…FVQLVRKMMN (131 aa)) constitute an HTH marR-type domain. The segment at residues 48–71 (QVALIEAAVSTKATLAEMLARMEN) is a DNA-binding region (H-T-H motif).

Its function is as follows. Involved in the temperature-dependent positive control of flagellum-driven swimming motility and cellular aggregation. Regulates fliC expression by directly interacting with fliC promoter. In Escherichia coli O157:H7, this protein is Transcriptional regulator HosA (hosA).